The following is a 452-amino-acid chain: Bifunctional protein GlmU (452 aa).

A pyrophosphorylase region spans residues 1-232 (MTARNSLTIV…EDEVRGINTK (232 aa)). UDP-N-acetyl-alpha-D-glucosamine contacts are provided by residues 11 to 14 (LAAG), Lys-25, Gln-78, and 83 to 84 (GT). Asp-108 lines the Mg(2+) pocket. Residues Gly-144, Glu-158, Asn-173, and Asn-230 each contribute to the UDP-N-acetyl-alpha-D-glucosamine site. Residue Asn-230 participates in Mg(2+) binding. The segment at 233-253 (AQLAEAETVMQTRLRLAAMAA) is linker. The tract at residues 254–452 (GVTLIAPETV…KSRHRKPKAH (199 aa)) is N-acetyltransferase. The UDP-N-acetyl-alpha-D-glucosamine site is built by Arg-319 and Lys-337. The Proton acceptor role is filled by His-349. 2 residues coordinate UDP-N-acetyl-alpha-D-glucosamine: Tyr-352 and Asn-363. Residues Ala-366, 372-373 (NY), Ser-391, Ser-409, and Arg-426 each bind acetyl-CoA.

This sequence in the N-terminal section; belongs to the N-acetylglucosamine-1-phosphate uridyltransferase family. The protein in the C-terminal section; belongs to the transferase hexapeptide repeat family. In terms of assembly, homotrimer. The cofactor is Mg(2+).

The protein localises to the cytoplasm. The enzyme catalyses alpha-D-glucosamine 1-phosphate + acetyl-CoA = N-acetyl-alpha-D-glucosamine 1-phosphate + CoA + H(+). The catalysed reaction is N-acetyl-alpha-D-glucosamine 1-phosphate + UTP + H(+) = UDP-N-acetyl-alpha-D-glucosamine + diphosphate. The protein operates within nucleotide-sugar biosynthesis; UDP-N-acetyl-alpha-D-glucosamine biosynthesis; N-acetyl-alpha-D-glucosamine 1-phosphate from alpha-D-glucosamine 6-phosphate (route II): step 2/2. It functions in the pathway nucleotide-sugar biosynthesis; UDP-N-acetyl-alpha-D-glucosamine biosynthesis; UDP-N-acetyl-alpha-D-glucosamine from N-acetyl-alpha-D-glucosamine 1-phosphate: step 1/1. Its pathway is bacterial outer membrane biogenesis; LPS lipid A biosynthesis. Functionally, catalyzes the last two sequential reactions in the de novo biosynthetic pathway for UDP-N-acetylglucosamine (UDP-GlcNAc). The C-terminal domain catalyzes the transfer of acetyl group from acetyl coenzyme A to glucosamine-1-phosphate (GlcN-1-P) to produce N-acetylglucosamine-1-phosphate (GlcNAc-1-P), which is converted into UDP-GlcNAc by the transfer of uridine 5-monophosphate (from uridine 5-triphosphate), a reaction catalyzed by the N-terminal domain. In Rhodopseudomonas palustris (strain ATCC BAA-98 / CGA009), this protein is Bifunctional protein GlmU.